Consider the following 596-residue polypeptide: Probable tripeptidyl-peptidase SED2 (596 aa).

Residues 1–16 form the signal peptide; that stretch reads MRLLKFVCLLASVAAA. A propeptide spans 17 to 203 (removed in mature form); it reads KPTPGASHKV…LESMSVEEFA (187 aa). The Peptidase S53 domain maps to 210–596; sequence LVTTACLREL…NFQALTKVLP (387 aa). N-linked (GlcNAc...) asparagine glycosylation occurs at N265. Catalysis depends on charge relay system residues E286 and D290. N403 carries N-linked (GlcNAc...) asparagine glycosylation. S501 serves as the catalytic Charge relay system. 2 residues coordinate Ca(2+): D543 and I544. N-linked (GlcNAc...) asparagine glycosylation is present at N572. Ca(2+)-binding residues include G576 and D578.

Ca(2+) serves as cofactor.

The protein resides in the secreted. It localises to the extracellular space. It catalyses the reaction Release of an N-terminal tripeptide from a polypeptide.. Its function is as follows. Secreted tripeptidyl-peptidase which degrades proteins at acidic pHs and is involved in virulence. The protein is Probable tripeptidyl-peptidase SED2 (SED2) of Arthroderma benhamiae (strain ATCC MYA-4681 / CBS 112371) (Trichophyton mentagrophytes).